Reading from the N-terminus, the 431-residue chain is Histidinol dehydrogenase (431 aa).

The NAD(+) site is built by Tyr-127, Gln-185, and Asn-208. The substrate site is built by Ser-234, Gln-256, and His-259. Zn(2+) is bound by residues Gln-256 and His-259. Residues Glu-323 and His-324 each act as proton acceptor in the active site. Positions 324, 357, 411, and 416 each coordinate substrate. Asp-357 is a binding site for Zn(2+). A Zn(2+)-binding site is contributed by His-416.

The protein belongs to the histidinol dehydrogenase family. The cofactor is Zn(2+).

It carries out the reaction L-histidinol + 2 NAD(+) + H2O = L-histidine + 2 NADH + 3 H(+). Its pathway is amino-acid biosynthesis; L-histidine biosynthesis; L-histidine from 5-phospho-alpha-D-ribose 1-diphosphate: step 9/9. Its function is as follows. Catalyzes the sequential NAD-dependent oxidations of L-histidinol to L-histidinaldehyde and then to L-histidine. The chain is Histidinol dehydrogenase from Vibrio parahaemolyticus serotype O3:K6 (strain RIMD 2210633).